Consider the following 149-residue polypeptide: Interleukin-2 (149 aa).

Positions 1-20 (MYRMQLLSCIALTLAVLANS) are cleaved as a signal peptide. T23 is a glycosylation site (O-linked (GalNAc...) threonine). A disulfide bridge links C78 with C121. A glycan (N-linked (GlcNAc...) asparagine) is linked at N106.

The protein belongs to the IL-2 family.

It is found in the secreted. Functionally, cytokine produced by activated CD4-positive helper T-cells and to a lesser extend activated CD8-positive T-cells and natural killer (NK) cells that plays pivotal roles in the immune response and tolerance. Binds to a receptor complex composed of either the high-affinity trimeric IL-2R (IL2RA/CD25, IL2RB/CD122 and IL2RG/CD132) or the low-affinity dimeric IL-2R (IL2RB and IL2RG). Interaction with the receptor leads to oligomerization and conformation changes in the IL-2R subunits resulting in downstream signaling starting with phosphorylation of JAK1 and JAK3. In turn, JAK1 and JAK3 phosphorylate the receptor to form a docking site leading to the phosphorylation of several substrates including STAT5. This process leads to activation of several pathways including STAT, phosphoinositide-3-kinase/PI3K and mitogen-activated protein kinase/MAPK pathways. Functions as a T-cell growth factor and can increase NK-cell cytolytic activity as well. Promotes strong proliferation of activated B-cells and subsequently immunoglobulin production. Plays a pivotal role in regulating the adaptive immune system by controlling the survival and proliferation of regulatory T-cells, which are required for the maintenance of immune tolerance. Moreover, participates in the differentiation and homeostasis of effector T-cell subsets, including Th1, Th2, Th17 as well as memory CD8-positive T-cells. This chain is Interleukin-2 (IL2), found in Equus caballus (Horse).